Here is a 295-residue protein sequence, read N- to C-terminus: 4-diphosphocytidyl-2-C-methyl-D-erythritol kinase (295 aa).

Lys-22 is a catalytic residue. 106-116 (PAGGGFGGGSS) contributes to the ATP binding site. The active site involves Asp-148.

Belongs to the GHMP kinase family. IspE subfamily.

It catalyses the reaction 4-CDP-2-C-methyl-D-erythritol + ATP = 4-CDP-2-C-methyl-D-erythritol 2-phosphate + ADP + H(+). It functions in the pathway isoprenoid biosynthesis; isopentenyl diphosphate biosynthesis via DXP pathway; isopentenyl diphosphate from 1-deoxy-D-xylulose 5-phosphate: step 3/6. In terms of biological role, catalyzes the phosphorylation of the position 2 hydroxy group of 4-diphosphocytidyl-2C-methyl-D-erythritol. In Xanthomonas axonopodis pv. citri (strain 306), this protein is 4-diphosphocytidyl-2-C-methyl-D-erythritol kinase.